Reading from the N-terminus, the 702-residue chain is Zinc finger CCCH domain-containing protein 62 (702 aa).

Residues 1 to 77 (MAAPAADDDD…SYDDPTFDPA (77 aa)) form a disordered region. Acidic residues predominate over residues 18-54 (EEDDGEEEEGSEEEVESDDEEEEEGEGYDWSEEDDPE). An SAP domain is found at 132–166 (LEKLKVYECKAYLRMHKLRLSGNKEVLLTRIRGQI). Disordered stretches follow at residues 288-349 (EKHA…NTVQ), 405-532 (SRTS…QQQP), 546-602 (GGTS…RETH), and 634-673 (QMSQ…NPQR). Positions 298–325 (KTREVRIKDKENERMRRLNRNKENKSKG) are enriched in basic and acidic residues. 2 stretches are compositionally biased toward polar residues: residues 326–349 (QDNM…NTVQ) and 405–419 (SRTS…QAPS). The segment covering 430 to 448 (QQQQQQQPPKSIKPAPIQQ) has biased composition (low complexity). 4 stretches are compositionally biased toward polar residues: residues 472 to 502 (SQEQ…QHGG), 522 to 532 (QQAVSYTQQQP), 546 to 565 (GGTS…NWGS), and 575 to 591 (PFTQ…NGSG). A C3H1-type zinc finger spans residues 674–702 (FRPWKPCFIYQQQGWCPYGENCKFMHDLR).

This is Zinc finger CCCH domain-containing protein 62 from Oryza sativa subsp. japonica (Rice).